The chain runs to 249 residues: Type III pantothenate kinase (249 aa).

6 to 13 (DCGNSFIK) is a binding site for ATP. Residues Y93 and 100–103 (GMDR) contribute to the substrate site. The active-site Proton acceptor is the D102. D122 is a binding site for K(+). An ATP-binding site is contributed by T125. A substrate-binding site is contributed by T181.

This sequence belongs to the type III pantothenate kinase family. As to quaternary structure, homodimer. Requires NH4(+) as cofactor. K(+) is required as a cofactor.

It is found in the cytoplasm. It catalyses the reaction (R)-pantothenate + ATP = (R)-4'-phosphopantothenate + ADP + H(+). Its pathway is cofactor biosynthesis; coenzyme A biosynthesis; CoA from (R)-pantothenate: step 1/5. Functionally, catalyzes the phosphorylation of pantothenate (Pan), the first step in CoA biosynthesis. The polypeptide is Type III pantothenate kinase (Pseudomonas putida (strain ATCC 47054 / DSM 6125 / CFBP 8728 / NCIMB 11950 / KT2440)).